Reading from the N-terminus, the 332-residue chain is Ribosomal RNA small subunit methyltransferase C (332 aa).

Belongs to the methyltransferase superfamily. RsmC family. In terms of assembly, monomer.

The protein localises to the cytoplasm. The catalysed reaction is guanosine(1207) in 16S rRNA + S-adenosyl-L-methionine = N(2)-methylguanosine(1207) in 16S rRNA + S-adenosyl-L-homocysteine + H(+). Functionally, specifically methylates the guanine in position 1207 of 16S rRNA in the 30S particle. The protein is Ribosomal RNA small subunit methyltransferase C of Pseudomonas putida (strain GB-1).